A 305-amino-acid chain; its full sequence is Pseudouridine-5'-phosphate glycosidase (305 aa).

The active-site Proton donor is the Glu-30. Residues Lys-91 and Val-111 each contribute to the substrate site. Residue Asp-143 participates in Mn(2+) binding. Residue 145–147 (SAD) coordinates substrate. Lys-164 (nucleophile) is an active-site residue.

This sequence belongs to the pseudouridine-5'-phosphate glycosidase family. As to quaternary structure, homotrimer. The cofactor is Mn(2+).

It catalyses the reaction D-ribose 5-phosphate + uracil = psi-UMP + H2O. Functionally, catalyzes the reversible cleavage of pseudouridine 5'-phosphate (PsiMP) to ribose 5-phosphate and uracil. Functions biologically in the cleavage direction, as part of a pseudouridine degradation pathway. The protein is Pseudouridine-5'-phosphate glycosidase of Mesorhizobium japonicum (strain LMG 29417 / CECT 9101 / MAFF 303099) (Mesorhizobium loti (strain MAFF 303099)).